The sequence spans 111 residues: Cornifelin homolog B (111 aa).

This sequence belongs to the cornifelin family.

The protein is Cornifelin homolog B (cnfn-b) of Xenopus laevis (African clawed frog).